Reading from the N-terminus, the 349-residue chain is Putative phytanoyl-CoA dioxygenase (349 aa).

2-oxoglutarate contacts are provided by residues lysine 118 and 169-171; that span reads HLD. Fe cation is bound by residues histidine 169 and aspartate 171.

This sequence belongs to the PhyH family. The cofactor is Fe cation. L-ascorbate is required as a cofactor.

The catalysed reaction is phytanoyl-CoA + 2-oxoglutarate + O2 = 2-hydroxyphytanoyl-CoA + succinate + CO2. It functions in the pathway lipid metabolism; fatty acid metabolism. Converts phytanoyl-CoA to 2-hydroxyphytanoyl-CoA. The sequence is that of Putative phytanoyl-CoA dioxygenase from Dictyostelium discoideum (Social amoeba).